Reading from the N-terminus, the 60-residue chain is Putative transcriptional regulator XtpA (60 aa).

In terms of biological role, controls the expression of small non-coding RNA GcvB, which represses the expression of many amino acid transporter proteins and uptake of aminoglycoside antibiotics in cells. Might be a transcriptional activator. An RNA (xtr) with a tRNA-like fold possibly derived from tRNA-Arg(UCG) is encoded entirely within the protein; xtr does not have the sequence corresponding to tRNA anticodon or variable arms. 10 synonymous codon changes in the xtr region of xtpA have the same phenotype as a deletion mutation, suggesting the mRNA secondary structure is important for function. The protein is Putative transcriptional regulator XtpA of Escherichia coli (strain K12).